A 160-amino-acid chain; its full sequence is Phosphopantetheine adenylyltransferase (160 aa).

Serine 8 is a binding site for substrate. ATP is bound by residues 8 to 9 and histidine 16; that span reads SF. The substrate site is built by lysine 40, leucine 74, and lysine 88. Residues 89-91, glutamate 99, and 124-130 contribute to the ATP site; these read GLR and YSFVSST.

The protein belongs to the bacterial CoaD family. As to quaternary structure, homohexamer. It depends on Mg(2+) as a cofactor.

The protein resides in the cytoplasm. The catalysed reaction is (R)-4'-phosphopantetheine + ATP + H(+) = 3'-dephospho-CoA + diphosphate. It participates in cofactor biosynthesis; coenzyme A biosynthesis; CoA from (R)-pantothenate: step 4/5. Reversibly transfers an adenylyl group from ATP to 4'-phosphopantetheine, yielding dephospho-CoA (dPCoA) and pyrophosphate. This chain is Phosphopantetheine adenylyltransferase, found in Thermus thermophilus (strain ATCC BAA-163 / DSM 7039 / HB27).